The sequence spans 362 residues: MERITVTLGERSYPITIAAGLFNEPASFLPLKSGDQVMLVTNETLAPLYLDKVRGVLERAGVNVDSVILPDGEQYKSLTVLDTVFTALLKKPHGRDTTLVALGGGVIGDLTGFAAASYQRGVRFIQVPTTLLSQVDSSVGGKTAVNHPLGKNMIGAFYQPASVVVDLDCLKTLPARELASGLAEVIKYGIILDADFFTWLEGNLDALLRLDGPAMAYCIRRCCELKAEVVAADEREAGLRALLNLGHTFGHAIEAEMGYGNWLHGEAVAAGIVMAARASERLGQFSSADTQRIIALLERAGLPVNGPCEMSAQDYLPHMLRDKKVLAGELRLVLPLTIGKSEVRGGVSHEVVLSAIADCQQA.

NAD(+)-binding positions include 71–76 (DGEQYK), 105–109 (GVIGD), 129–130 (TT), Lys142, Lys151, and 169–172 (CLKT). Residues Glu184, His247, and His264 each coordinate Zn(2+).

Belongs to the sugar phosphate cyclases superfamily. Dehydroquinate synthase family. It depends on NAD(+) as a cofactor. Co(2+) serves as cofactor. The cofactor is Zn(2+).

The protein resides in the cytoplasm. The enzyme catalyses 7-phospho-2-dehydro-3-deoxy-D-arabino-heptonate = 3-dehydroquinate + phosphate. The protein operates within metabolic intermediate biosynthesis; chorismate biosynthesis; chorismate from D-erythrose 4-phosphate and phosphoenolpyruvate: step 2/7. Catalyzes the conversion of 3-deoxy-D-arabino-heptulosonate 7-phosphate (DAHP) to dehydroquinate (DHQ). The sequence is that of 3-dehydroquinate synthase from Salmonella typhi.